Consider the following 231-residue polypeptide: Probable calcium-binding protein CML21 (231 aa).

4 consecutive EF-hand domains span residues 54–89 (DGLR…LEIS), 90–125 (FDEE…VYLL), 145–180 (PTFE…SGER), and 181–216 (SSGR…WVGI). Residues D67, D69, N71, S73, and E78 each contribute to the Ca(2+) site. Positions 158, 160, 162, 164, 169, 194, 196, 198, 200, and 205 each coordinate Ca(2+).

Functionally, potential calcium sensor. In Arabidopsis thaliana (Mouse-ear cress), this protein is Probable calcium-binding protein CML21 (CML21).